The chain runs to 464 residues: Protein FAM90A22 (464 aa).

3 disordered regions span residues 1 to 43, 70 to 389, and 415 to 437; these read MMAR…PRLK, PATL…HDGA, and HSPE…SEAP. 2 stretches are compositionally biased toward basic and acidic residues: residues 74 to 89 and 97 to 114; these read GKKE…KPRA and NKDK…DPQR. Over residues 182–197 the composition is skewed to low complexity; that stretch reads SLSPLRKTSLSSSSSL.

It belongs to the FAM90 family.

The polypeptide is Protein FAM90A22 (Homo sapiens (Human)).